We begin with the raw amino-acid sequence, 138 residues long: uncharacterized protein (138 aa).

3 helical membrane passes run 8–28, 47–67, and 82–102; these read LIIQ…AFLP, FIIC…TIIV, and TLPV…IAFI.

To U.parvum UU007, UU008 and UU041.

The protein resides in the cell membrane. This is an uncharacterized protein from Ureaplasma parvum serovar 3 (strain ATCC 700970).